An 860-amino-acid chain; its full sequence is Leucine--tRNA ligase (860 aa).

The 'HIGH' region signature appears at 42-52 (PYPSGRLHMGH). A 'KMSKS' region motif is present at residues 619–623 (KMSKS). K622 serves as a coordination point for ATP.

The protein belongs to the class-I aminoacyl-tRNA synthetase family.

The protein resides in the cytoplasm. It carries out the reaction tRNA(Leu) + L-leucine + ATP = L-leucyl-tRNA(Leu) + AMP + diphosphate. The chain is Leucine--tRNA ligase from Actinobacillus succinogenes (strain ATCC 55618 / DSM 22257 / CCUG 43843 / 130Z).